A 786-amino-acid chain; its full sequence is MTKKLTIKRKVKEPEPQNEAPDSHESSDNEEEEEEDLLQAVKDPGEDSTDDEGIDQEYQTDSSEDLEFESDEEGNYLGRKGAEGSSGDDDEESAEDEEEEDDADAKKSSKNNDEEAATTSKSIKKSQEKPTSSNKVVPVVPARDPSKVEYADSDTSDEEDIRNTVGNIPMHWYDEYKHIGYDWDAKKIVKPPKGDQIDDFLRKIEDPNFWRTVKDPLTGQEVLLTDADIALIKRINSGRIPNEEHDEYAPWIEWFTSEVEKMPIKNVPDHKRSFLPSGSEKKTVSRMVHALKMGWMKTTEEVQREKQEKRGPKFYMLWETDTSREQMRRIHDPVSAPKRDLPGHAESYNPPPEYLFDEKEAKEWHKLKDEPHRRKLHFMPQKFKSLREVPAYSRYLRERFLRCLDLYLCPRAKRVKLNIDAEYLIPKLPSPRDLQPFPTVESLVYRGHTDLVRSVSVEPKGEYLVSGSDDKTVKIWEIATGRCIRTIETEDVVRCVAWCPNAKLSIIAVATGSRLLLVNPKVGDKLLVKKTDDLLAEAPVLDVIENERIKTAVQWANAEPADQEKGVRVIITHFKPIRQVTWHGRGDYLATVMPEGANRSALIHQLSKRRSQIPFSKSKGLIQCVLFHPVKPCFFVATQHNIRIYDLVKQELIKKLLTNSKWISGMSIHPKGDNLLVSTYDKKMLWFDLDLSTKPYQTMRLHRNAVRSVAFHLRYPLFASGSDDQAVIVSHGMVYNDLLQNPLIVPLKKLQTHEKREEFGVLDVNWHPVQPWVFSTGADCTIRLFT.

Positions 1-11 are enriched in basic residues; it reads MTKKLTIKRKV. The segment at 1–161 is disordered; the sequence is MTKKLTIKRK…DSDTSDEEDI (161 aa). Acidic residues-rich tracts occupy residues 28-37, 46-55, 62-74, and 86-103; these read DNEEEEEEDL, EDSTDDEGID, SSED…DEEG, and SGDD…EDDA. The span at 104–113 shows a compositional bias: basic and acidic residues; that stretch reads DAKKSSKNND. Residues 151–160 are compositionally biased toward acidic residues; the sequence is ADSDTSDEED. WD repeat units follow at residues 447–488, 490–528, 572–614, 617–655, 658–697, 701–740, and 756–786; these read GHTD…RTIE, EDVV…KLLV, THFK…SQIP, KSKG…LIKK, TNSK…KPYQ, LHRN…DLLQ, and REEF…RLFT.

This sequence belongs to the WD repeat BOP1/ERB1 family.

The protein resides in the nucleus. The protein localises to the nucleolus. It localises to the nucleoplasm. In terms of biological role, required for maturation of ribosomal RNAs and formation of the large ribosomal subunit. The chain is Ribosome biogenesis protein BOP1 homolog from Drosophila pseudoobscura pseudoobscura (Fruit fly).